The following is an 89-amino-acid chain: Small ribosomal subunit protein bS20 (89 aa).

Positions 1–26 (MANIKASKKDALTSEKRRKKNSSRRS) are disordered. Basic residues predominate over residues 16-26 (KRRKKNSSRRS).

Belongs to the bacterial ribosomal protein bS20 family.

In terms of biological role, binds directly to 16S ribosomal RNA. This chain is Small ribosomal subunit protein bS20, found in Buchnera aphidicola subsp. Acyrthosiphon pisum (strain 5A).